A 277-amino-acid polypeptide reads, in one-letter code: Large ribosomal subunit protein uL2 (277 aa).

Residues Val220–Arg277 are disordered. Positions Thr254 to Lys263 are enriched in basic residues.

Belongs to the universal ribosomal protein uL2 family. As to quaternary structure, part of the 50S ribosomal subunit. Forms a bridge to the 30S subunit in the 70S ribosome.

Functionally, one of the primary rRNA binding proteins. Required for association of the 30S and 50S subunits to form the 70S ribosome, for tRNA binding and peptide bond formation. It has been suggested to have peptidyltransferase activity; this is somewhat controversial. Makes several contacts with the 16S rRNA in the 70S ribosome. This chain is Large ribosomal subunit protein uL2, found in Latilactobacillus sakei subsp. sakei (strain 23K) (Lactobacillus sakei subsp. sakei).